The primary structure comprises 546 residues: Cytochrome P450 monooxygenase 219 (546 aa).

The signal sequence occupies residues 1–22 (MATLIVLLYGLLAFGTVWLVRR). N-linked (GlcNAc...) asparagine glycosylation is found at N367 and N441. A heme-binding site is contributed by C487.

This sequence belongs to the cytochrome P450 family. Heme serves as cofactor.

It functions in the pathway secondary metabolite biosynthesis. Cytochrome P450 monooxygenase that is able to use testosterone, anthracene, carbazole, pyrene, phenanthrene and trans-stilbene as substrates for oxidation. These multifunctional properties against a series of polycyclic aromatic hydrocarbons (PAHs) suggest that CYP219 would play important roles, at least in part, in fungal metabolic systems involved in xenobiotic detoxification. This is Cytochrome P450 monooxygenase 219 from Postia placenta (strain ATCC 44394 / Madison 698-R) (Brown rot fungus).